Consider the following 524-residue polypeptide: Serine/threonine-protein phosphatase 2A 56 kDa regulatory subunit gamma isoform (524 aa).

Met1 is modified (N-acetylmethionine). The disordered stretch occupies residues 476–508 (SDEARQAQKELKKDRPLVRRKSELPQDPHTEKA).

It belongs to the phosphatase 2A regulatory subunit B56 family. In terms of assembly, PP2A consists of a common heterodimeric core enzyme, composed of PPP2CA a 36 kDa catalytic subunit (subunit C) and PPP2R1A a 65 kDa constant regulatory subunit (PR65 or subunit A), that associates with a variety of regulatory subunits. Proteins that associate with the core dimer include three families of regulatory subunits B (the R2/B/PR55/B55, R3/B''/PR72/PR130/PR59 and R5/B'/B56 families), the 48 kDa variable regulatory subunit, viral proteins, and cell signaling molecules. Interacts with SGO1. Interacts with SGO1; the interaction is direct. May interact with TP53. Interacts with IER3 and/or ERK kinases; regulates ERK dephosphorylation. Interacts with CIP2A; this interaction stabilizes CIP2A. Highest levels in heart, liver and brain. Lower levels in skeletal muscle, spleen, kidney and lung. Isoform 4 is testis-specific.

It is found in the nucleus. The protein localises to the chromosome. The protein resides in the centromere. Functionally, the B regulatory subunit might modulate substrate selectivity and catalytic activity, and might also direct the localization of the catalytic enzyme to a particular subcellular compartment. The PP2A-PPP2R5C holoenzyme may activate TP53 and play a role in DNA damage-induced inhibition of cell proliferation. PP2A-PPP2R5C may also regulate the ERK signaling pathway through ERK dephosphorylation. The chain is Serine/threonine-protein phosphatase 2A 56 kDa regulatory subunit gamma isoform (Ppp2r5c) from Mus musculus (Mouse).